The sequence spans 542 residues: Chaperonin GroEL 3 (542 aa).

ATP-binding positions include 30 to 33 (TLGP), Lys-51, 87 to 91 (DGTTT), Gly-415, and Asp-496.

Belongs to the chaperonin (HSP60) family. As to quaternary structure, forms a cylinder of 14 subunits composed of two heptameric rings stacked back-to-back. Interacts with the co-chaperonin GroES.

It localises to the cytoplasm. The enzyme catalyses ATP + H2O + a folded polypeptide = ADP + phosphate + an unfolded polypeptide.. Its function is as follows. Together with its co-chaperonin GroES, plays an essential role in assisting protein folding. The GroEL-GroES system forms a nano-cage that allows encapsulation of the non-native substrate proteins and provides a physical environment optimized to promote and accelerate protein folding. The polypeptide is Chaperonin GroEL 3 (Rhizobium johnstonii (strain DSM 114642 / LMG 32736 / 3841) (Rhizobium leguminosarum bv. viciae)).